Consider the following 230-residue polypeptide: UPF0173 metal-dependent hydrolase Pden_0574 (230 aa).

The protein belongs to the UPF0173 family.

This Paracoccus denitrificans (strain Pd 1222) protein is UPF0173 metal-dependent hydrolase Pden_0574.